The chain runs to 349 residues: N-acetyl-gamma-glutamyl-phosphate reductase (349 aa).

Residue cysteine 149 is part of the active site.

This sequence belongs to the NAGSA dehydrogenase family. Type 1 subfamily.

It localises to the cytoplasm. The catalysed reaction is N-acetyl-L-glutamate 5-semialdehyde + phosphate + NADP(+) = N-acetyl-L-glutamyl 5-phosphate + NADPH + H(+). The protein operates within amino-acid biosynthesis; L-arginine biosynthesis; N(2)-acetyl-L-ornithine from L-glutamate: step 3/4. Its function is as follows. Catalyzes the NADPH-dependent reduction of N-acetyl-5-glutamyl phosphate to yield N-acetyl-L-glutamate 5-semialdehyde. The polypeptide is N-acetyl-gamma-glutamyl-phosphate reductase (Acinetobacter baumannii (strain AB307-0294)).